The sequence spans 68 residues: MVQKKSQSGKTVTVEQIGSPIRNSQIQRATLKGLGLNKMRRRRVLEDTLCVRGMIARVRHLVRVIDED.

It belongs to the universal ribosomal protein uL30 family. Part of the 50S ribosomal subunit.

The chain is Large ribosomal subunit protein uL30 from Bartonella tribocorum (strain CIP 105476 / IBS 506).